A 174-amino-acid polypeptide reads, in one-letter code: UPF0316 protein LMHCC_0787 (174 aa).

The next 3 membrane-spanning stretches (helical) occupy residues 4-24 (GIFIVATIFVVNILYVTIYTV), 36-56 (LAALSSVFEMIIYVVALSLVL), and 62-82 (IANVLAYAIGFGVGIIVGMKI).

Belongs to the UPF0316 family.

It localises to the cell membrane. This chain is UPF0316 protein LMHCC_0787, found in Listeria monocytogenes serotype 4a (strain HCC23).